Consider the following 24-residue polypeptide: Aldehyde dehydrogenase gamma chain (24 aa).

As to quaternary structure, heterotrimer composed of an alpha, a beta and a gamma chain. Requires [2Fe-2S] cluster as cofactor.

The catalysed reaction is an aldehyde + a quinone + H2O = a quinol + a carboxylate + H(+). In Comamonas testosteroni (Pseudomonas testosteroni), this protein is Aldehyde dehydrogenase gamma chain.